The following is a 518-amino-acid chain: MDQSMIALALFIILLVLLYKWSVAKYDVFSERGVSHEKPWPLIGNIPLKAMIGGMPVLKKMIELHTKHTGSPVYGIYALRDAVFFVRDPELIKLIGIKEFDHFVNHNSMHNNIQESILSKSLISLRDGRWKEMRNILTPAFTGSKMRIMYDLIQSCSEEGVIHIQEQLELSQDASIELEMKDYFTRFANDVIATVAFGISINSFRRKDNEFFRIGQAMSRISAWSVVKAMLYALFPRLMKVLRIQVLDTKNIDYFSSLVTAAMRYRQEHKVVRPDMIHLLMEAKQQRLADLSDKSKDELYYSEFTADDLLAQCLLFFFAGFEIISSSLCFLTHELCLNPTVQDRLYEEIISVHEELKGQPLTYDKLTKMKYLDMVVLEALRKWPPSISTDRECRQDIDLFDENGQKLFSARKGDVLQIPIFSLHHDPENFEDPEFFNPERFADGHALESRVYMPFGVGPRNCIGNRMALMELKSIVYQLLLNFKLLPAKRTSRDLLNDIRGHGLKPKNGFWLKFEARQ.

Heme is bound at residue C462.

It belongs to the cytochrome P450 family. The cofactor is heme.

It localises to the endoplasmic reticulum membrane. It is found in the microsome membrane. In terms of biological role, may be involved in the metabolism of insect hormones and in the breakdown of synthetic insecticides. The sequence is that of Probable cytochrome P450 9h1 (Cyp9h1) from Drosophila melanogaster (Fruit fly).